The sequence spans 108 residues: Thioredoxin (108 aa).

One can recognise a Thioredoxin domain in the interval 2–108 (SEHIVNVTDA…QLAAFLDANI (107 aa)). An intrachain disulfide couples cysteine 33 to cysteine 36.

This sequence belongs to the thioredoxin family.

Functionally, participates in various redox reactions through the reversible oxidation of its active center dithiol to a disulfide and catalyzes dithiol-disulfide exchange reactions. The polypeptide is Thioredoxin (trxA) (Pseudomonas aeruginosa (strain ATCC 15692 / DSM 22644 / CIP 104116 / JCM 14847 / LMG 12228 / 1C / PRS 101 / PAO1)).